The sequence spans 637 residues: Glutamate--cysteine ligase catalytic subunit (637 aa).

An N-acetylmethionine modification is found at M1. Phosphoserine occurs at positions 5 and 8.

This sequence belongs to the glutamate--cysteine ligase type 3 family. In terms of assembly, heterodimer of a catalytic heavy chain and a regulatory light chain.

The catalysed reaction is L-cysteine + L-glutamate + ATP = gamma-L-glutamyl-L-cysteine + ADP + phosphate + H(+). It catalyses the reaction (2S)-2-aminobutanoate + L-glutamate + ATP = gamma-L-glutamyl-(2S)-2-aminobutanoate + ADP + phosphate + H(+). Its pathway is sulfur metabolism; glutathione biosynthesis; glutathione from L-cysteine and L-glutamate: step 1/2. Feedback inhibition by glutathione. Catalyzes the ATP-dependent ligation of L-glutamate and L-cysteine and participates in the first and rate-limiting step in glutathione biosynthesis. This is Glutamate--cysteine ligase catalytic subunit from Homo sapiens (Human).